The following is a 423-amino-acid chain: Gamma-glutamyl phosphate reductase (423 aa).

Belongs to the gamma-glutamyl phosphate reductase family.

The protein resides in the cytoplasm. It carries out the reaction L-glutamate 5-semialdehyde + phosphate + NADP(+) = L-glutamyl 5-phosphate + NADPH + H(+). It participates in amino-acid biosynthesis; L-proline biosynthesis; L-glutamate 5-semialdehyde from L-glutamate: step 2/2. Catalyzes the NADPH-dependent reduction of L-glutamate 5-phosphate into L-glutamate 5-semialdehyde and phosphate. The product spontaneously undergoes cyclization to form 1-pyrroline-5-carboxylate. The protein is Gamma-glutamyl phosphate reductase of Burkholderia ambifaria (strain MC40-6).